The chain runs to 50 residues: Nosiheptide precursor (50 aa).

Residues 38-39 (SC) constitute a cross-link (thiazole-4-carboxylic acid (Ser-Cys)). Residues 38-46 (SCTTCECCC) constitute a cross-link (3-hydroxypyridine-2,5-dicarboxylic acid (Ser-Cys) (with S-47)). The segment at residues 38-47 (SCTTCECCCS) is a cross-link (3-hydroxypyridine-2,5-dicarboxylic acid (Ser-Ser) (with C-46)). Residues 41–42 (TC) constitute a cross-link (thiazole-4-carboxylic acid (Thr-Cys)). At E43 the chain carries 4-hydroxyglutamate. Residues 43–44 (EC) constitute a cross-link (thiazole-4-carboxylic acid (Glu-Cys)). The 2-(cystein-S-ylcarbonyl)-3-methyl-4-(glutam-5-yloxy)methylindole (Glu-Cys) cross-link spans 43 to 45 (ECC). Positions 45-46 (CC) form a cross-link, thiazole-4-carboxylic acid (Cys-Cys). Positions 47–48 (SC) form a cross-link, thiazole-4-carboxylic acid (Ser-Cys). 2,3-didehydroalanine (Ser) is present on S49. S49 bears the Serine amide; atypical mark.

It belongs to the thiocillin family. Post-translationally, the amidation of Ser-49 is produced by the oxidative cleavage of Ser-50 rather than of a glycine, as in eukaryotes.

Inhibits bacterial protein biosynthesis by binding to ribosomes. Specifically, binds to the complex of 23S rRNA and ribosomal protein L11 (RPLK) in the 50S ribosomal subunit. While allowing a weak binding of elongation factor G (EF-G) to the ribosome and subsequent GTP-hydrolysis, probably impairs conformational changes in both the ribosome and EF-G which are necessary for translocation. In vitro, inhibits Gram-positive bacteria S.aureus strain 209P (MIC=0.0009 ug/ml), S.aureus strain 133 (MIC=0.0019 ug/ml), S.aureus strain B3 (MIC=0.003 ug/ml), S.aureus strain Hb (MIC=0.003 ug/ml), M.citreus strain ATCC 8411 (MIC=0.0038 ug/ml), M.lysodeikticus strain ATCC 4698 (MIC=0.003 ug/ml), S.lutea strain ATCC 9341 (MIC=0.0011 ug/ml), S.faecalis strain ATCC 9790 (MIC=0.0007 ug/ml), S.viridans (MIC=0.0065 ug/ml), S.pyogenes hemolyticus strain Dig7 (MIC=0.00028 ug/ml), D.pneumoniae strain Til (MIC=0.00015 ug/ml), N.catrrhalis (MIC=0.0017 ug/ml), L.casei strain ATCC 6633 (MIC=0.003 ug/ml), B.cereus strain ATCC 6630 (MIC=0.0071 ug/ml) and various isolates of L.monocytogenes. In vitro, inhibits Gram-negative bacterium P.multocida strain A125 (MIC=0.0024 ug/ml) but not M.smegmatis strain ATCC 6630, S.typhimurium, A.aerogenes strain ATCC 8308, P.vulgaris, K.pneumoniae strain ATCC 10031, S.marcescens strain A476, P.aeruginosa strain Bass or B.bronchiseptica strain CN387. Does not inhibit Gram-negative bacterium E.coli strain ATCC 9637 but does inhibit purified ribosomes from E.coli. In vivo, has no systemic effect in mice infected with staphylococci or streptococci when applied orally or subcutaneously. Has a local effect in mice infected subcutaneously or intraperitoneally with staphylococci when applied immediately afterwards. Is not toxic to mice. The chain is Nosiheptide precursor from Streptomyces actuosus.